The sequence spans 129 residues: Glycine cleavage system H protein (129 aa).

The Lipoyl-binding domain maps to 23–104 (SVTVGITQHA…CYAAWLFKLK (82 aa)). Lys-64 carries the post-translational modification N6-lipoyllysine.

The protein belongs to the GcvH family. As to quaternary structure, the glycine cleavage system is composed of four proteins: P, T, L and H. (R)-lipoate serves as cofactor.

The glycine cleavage system catalyzes the degradation of glycine. The H protein shuttles the methylamine group of glycine from the P protein to the T protein. The polypeptide is Glycine cleavage system H protein (Nitrosomonas europaea (strain ATCC 19718 / CIP 103999 / KCTC 2705 / NBRC 14298)).